A 157-amino-acid polypeptide reads, in one-letter code: Polyferredoxin protein VhcB (157 aa).

3 consecutive 4Fe-4S ferredoxin-type domains span residues 23–52, 62–92, and 100–129; these read NGISWDREKCEYCGPCAIKCPNDAIMVVNP, KTERANEFKMCDLCGTCVSACPTEALQMGKI, and DRIEFTPSLCDSCGACVEICPQNVLKLNEE. [4Fe-4S] cluster is bound by residues C32, C35, C38, C42, C72, C75, C78, C82, C109, C112, C115, C119, C136, C139, C142, and C146.

It depends on [4Fe-4S] cluster as a cofactor.

This is Polyferredoxin protein VhcB (vhcB) from Methanococcus voltae.